Here is a 138-residue protein sequence, read N- to C-terminus: Large ribosomal subunit protein uL16 (138 aa).

Positions 1-13 (MLQPKRRKYRKEQ) are enriched in basic residues. Residues 1–24 (MLQPKRRKYRKEQKGRNTGKATRG) are disordered.

The protein belongs to the universal ribosomal protein uL16 family. Part of the 50S ribosomal subunit.

Binds 23S rRNA and is also seen to make contacts with the A and possibly P site tRNAs. The polypeptide is Large ribosomal subunit protein uL16 (Burkholderia multivorans (strain ATCC 17616 / 249)).